The primary structure comprises 441 residues: ATP-dependent RNA helicase sub2 (441 aa).

Positions 19–29 are enriched in low complexity; it reads DAAATTAAPAA. The interval 19–43 is disordered; that stretch reads DAAATTAAPAANGAQDKKGDLTVSG. The Q motif signature appears at 58-86; that stretch reads TGFRDFLLKGELLRAITDCGFEHPSEVQQ. Residues 89–264 form the Helicase ATP-binding domain; that stretch reads IPTAILNVDV…KKFMRNPLEV (176 aa). Position 102–109 (102–109) interacts with ATP; sequence AKSGLGKT. The DEAD box motif lies at 211–214; it reads DECD. Residues 276-437 enclose the Helicase C-terminal domain; it reads GLQQYYIKLS…EYPEGGVDSS (162 aa).

Belongs to the DEAD box helicase family. DECD subfamily.

It is found in the nucleus. The enzyme catalyses ATP + H2O = ADP + phosphate + H(+). In terms of biological role, ATP-binding RNA helicase involved in transcription elongation and required for the export of mRNA out of the nucleus. SUB2 also plays a role in pre-mRNA splicing and spliceosome assembly. May be involved in rDNA and telomeric silencing, and maintenance of genome integrity. The sequence is that of ATP-dependent RNA helicase sub2 (sub2) from Neosartorya fischeri (strain ATCC 1020 / DSM 3700 / CBS 544.65 / FGSC A1164 / JCM 1740 / NRRL 181 / WB 181) (Aspergillus fischerianus).